Consider the following 156-residue polypeptide: Small ribosomal subunit protein uS7 (156 aa).

It belongs to the universal ribosomal protein uS7 family. Part of the 30S ribosomal subunit. Contacts proteins S9 and S11.

Its function is as follows. One of the primary rRNA binding proteins, it binds directly to 16S rRNA where it nucleates assembly of the head domain of the 30S subunit. Is located at the subunit interface close to the decoding center, probably blocks exit of the E-site tRNA. This chain is Small ribosomal subunit protein uS7, found in Salinispora arenicola (strain CNS-205).